Reading from the N-terminus, the 341-residue chain is Aspartate carbamoyltransferase catalytic subunit (341 aa).

Arg89 and Thr90 together coordinate carbamoyl phosphate. Lys117 is a binding site for L-aspartate. Carbamoyl phosphate contacts are provided by Arg139, His169, and Gln172. L-aspartate is bound by residues Arg202 and Arg257. Residues Gly298 and Pro299 each coordinate carbamoyl phosphate.

It belongs to the aspartate/ornithine carbamoyltransferase superfamily. ATCase family. As to quaternary structure, heterododecamer (2C3:3R2) of six catalytic PyrB chains organized as two trimers (C3), and six regulatory PyrI chains organized as three dimers (R2).

It catalyses the reaction carbamoyl phosphate + L-aspartate = N-carbamoyl-L-aspartate + phosphate + H(+). The protein operates within pyrimidine metabolism; UMP biosynthesis via de novo pathway; (S)-dihydroorotate from bicarbonate: step 2/3. Its function is as follows. Catalyzes the condensation of carbamoyl phosphate and aspartate to form carbamoyl aspartate and inorganic phosphate, the committed step in the de novo pyrimidine nucleotide biosynthesis pathway. This Paraburkholderia phytofirmans (strain DSM 17436 / LMG 22146 / PsJN) (Burkholderia phytofirmans) protein is Aspartate carbamoyltransferase catalytic subunit.